The following is a 187-amino-acid chain: MEEKKALIIVDVQKAFDDKKWGERNNVKAEENISKILELWREKGWTVIYIQHTSDKPHSLFHPKNEGFAIKEIVKPMDEEVIITKTVNSSFIGTNLEEFLKLNEITTVVITGLTTPHCVSTTTRMSGNLGFDTYLISDATAAFGMRDQNDTYYDAATIHNISLATLHDEFATILTTDQLINDFIKTH.

The protein belongs to the isochorismatase family.

This is an uncharacterized protein from Bacillus subtilis (strain 168).